Reading from the N-terminus, the 376-residue chain is Queuine tRNA-ribosyltransferase (376 aa).

Asp93 (proton acceptor) is an active-site residue. Residues 93–97 (DSGGF), Asp147, Gln190, and Gly217 contribute to the substrate site. Positions 248–254 (GVGTPDD) are RNA binding. The Nucleophile role is filled by Asp267. Residues 272–276 (TRSGR) are RNA binding; important for wobble base 34 recognition.

It belongs to the queuine tRNA-ribosyltransferase family. In terms of assembly, homodimer. Within each dimer, one monomer is responsible for RNA recognition and catalysis, while the other monomer binds to the replacement base PreQ1.

It catalyses the reaction 7-aminomethyl-7-carbaguanine + guanosine(34) in tRNA = 7-aminomethyl-7-carbaguanosine(34) in tRNA + guanine. It participates in tRNA modification; tRNA-queuosine biosynthesis. Catalyzes the base-exchange of a guanine (G) residue with the queuine precursor 7-aminomethyl-7-deazaguanine (PreQ1) at position 34 (anticodon wobble position) in tRNAs with GU(N) anticodons (tRNA-Asp, -Asn, -His and -Tyr). Catalysis occurs through a double-displacement mechanism. The nucleophile active site attacks the C1' of nucleotide 34 to detach the guanine base from the RNA, forming a covalent enzyme-RNA intermediate. The proton acceptor active site deprotonates the incoming PreQ1, allowing a nucleophilic attack on the C1' of the ribose to form the product. After dissociation, two additional enzymatic reactions on the tRNA convert PreQ1 to queuine (Q), resulting in the hypermodified nucleoside queuosine (7-(((4,5-cis-dihydroxy-2-cyclopenten-1-yl)amino)methyl)-7-deazaguanosine). In Agrobacterium fabrum (strain C58 / ATCC 33970) (Agrobacterium tumefaciens (strain C58)), this protein is Queuine tRNA-ribosyltransferase.